A 202-amino-acid chain; its full sequence is Peptidyl-tRNA hydrolase (202 aa).

Tyr-19 contributes to the tRNA binding site. His-24 serves as the catalytic Proton acceptor. 3 residues coordinate tRNA: Tyr-70, Asn-72, and Asn-118.

It belongs to the PTH family. Monomer.

Its subcellular location is the cytoplasm. The catalysed reaction is an N-acyl-L-alpha-aminoacyl-tRNA + H2O = an N-acyl-L-amino acid + a tRNA + H(+). Functionally, hydrolyzes ribosome-free peptidyl-tRNAs (with 1 or more amino acids incorporated), which drop off the ribosome during protein synthesis, or as a result of ribosome stalling. Catalyzes the release of premature peptidyl moieties from peptidyl-tRNA molecules trapped in stalled 50S ribosomal subunits, and thus maintains levels of free tRNAs and 50S ribosomes. This is Peptidyl-tRNA hydrolase from Prochlorococcus marinus (strain NATL2A).